We begin with the raw amino-acid sequence, 1406 residues long: MRRLPLLPPCPLLLLLLLPAEVRCTTACTDDCSLKNVTEEMGTSSNDELSVNATSGNRRLSEDVSLPGRAMSDQNSVAQPRAVLDLKTEYVGVTSVNLTWTVNDTASDSYTYRIEVRNGSSINNKTSDITDAEITGLIPGTLYTFTVFAVAADGQTAGEGASISLYTKPSPVLDLKAEYVGVTSVNLTWTVNDTASASYTYRIEVTSDSSIDSLTSSVTMAEITGLIPGTLYSFKVFAVAADNRTEADGASISLYTKPSPVLDLKAEYVGVTSVNLTWTVNGTALTAYTYRIEVRNATSIRNETSNINKIEITGLIPGTSYNFKVFATPVNNTTEEEGLSLNLYTKPSPVLRVVTEYVGVTSVNLTWMVDDTASDSYTYRIEVRNGSSINNKTSDITDAEITGLIPGTLYTFTVFAVAADGQTAGEGASISLYTKPSPVLDLKAEYVGVTSVNLTWTVNDTASASYTYRIEVTSDSSIDSLTSNVTMAEITGLIPGTLYNFTVFAVAADNRTEADGAFTSLYTKPTPVTDLKAEHGVTSVSLNWMVNDTASDSYTYRIEVRNGHSVNNKTSNIPETEITGLNPGTLYTFTVFAVAADGETEGEGASISVYTKPRAVLHLKTEYVGVTSVNLTWTVNDTDSASYTYRIEVRNGSSINNKTSDITDAEITGLDPGTLYIFTVFAVAADGQTAGEGASISLYTKPSMVLNLKAEYVTMTSVNLTWMVNDAESASYTYRIEVAHESLINETMSNVTKSIVTYLIPGTSYNFTVFAIAADNQTEGEGASISQNTVPSSVNAFQCEAVANMSYLTLKWNCPYGGYSGFDIEIFNGTWTKKQQSQFCGREGSEEIFKTEPLDYYKTYTVSVTTVSDGLTSLPVQKICKTSITDPPVPNKAPLVKAVSHNSLSVEFPDFESVNGPLKAYAVMIVTEAEGCLPSKSDLDYTYNDFKQKMTATYVTYVIDVEEISSSSHSQNGHNIVDVGKGNTMYGYENGPLIPLHSYRASVAGFTNINFTVANKIMGEQSYVSFSPCSEVVSLPQDPGVIAGAVIGCLLAILAVVAIGGYIFWRRRRKDKRNTEVSFSPIKIKKSKMIKVENFESYFKKQQADSNCGFAEEYEELKSAGVHQPKFAAEIAENRGKNRYNNVLPYDISRVKLSNPSCTTDDYINANYMPGYSSKKAFIAAQGPLPNTIEDFWRMIWEKNIYSIVMLTKCVEQARTKCEQYWPDKQSKSYGDIIVTMVSEVVLPEWTIRDFNVENADTMESHTVRQFHFTSWPDHGVPETTDLLINFRHLVHEYSSQNPIDSPILVHCSAGVGRTGTFIAIDRLIQQIEMENTVDVYGVVYDLRMHRPLMVQTEDQYVFLNQCVMDIIRSQKEKKTDLIYQNTTAMAIYENFTPGPAFGKANGYHA.

The first 24 residues, 1–24, serve as a signal peptide directing secretion; that stretch reads MRRLPLLPPCPLLLLLLLPAEVRC. Residues 25-1044 are Extracellular-facing; it reads TTACTDDCSL…LPQDPGVIAG (1020 aa). 36 N-linked (GlcNAc...) asparagine glycosylation sites follow: N36, N52, N97, N103, N118, N124, N186, N192, N243, N275, N281, N296, N302, N331, N332, N364, N385, N391, N453, N459, N484, N500, N510, N547, N568, N630, N636, N651, N657, N719, N745, N750, N766, N776, N804, and N828. The segment at 39 to 72 is disordered; sequence EEMGTSSNDELSVNATSGNRRLSEDVSLPGRAMS. Residues 41–58 show a composition bias toward polar residues; that stretch reads MGTSSNDELSVNATSGNR. Fibronectin type-III domains follow at residues 82-170, 171-259, 260-343, 346-437, 438-523, 524-614, 615-703, 704-793, 794-888, and 887-979; these read AVLD…TKPS, PVLD…TKPS, PVLD…SLNL, KPSP…TKPS, PVLD…SLYT, KPTP…TKPR, AVLH…TKPS, MVLN…VPSS, VNAF…TDPP, and PPVP…IVDV. N-linked (GlcNAc...) asparagine glycosylation is present at N1010. A helical membrane pass occupies residues 1045–1065; the sequence is AVIGCLLAILAVVAIGGYIFW. The Cytoplasmic segment spans residues 1066 to 1406; that stretch reads RRRRKDKRNT…AFGKANGYHA (341 aa). The Tyrosine-protein phosphatase domain occupies 1110–1367; that stretch reads FAEEYEELKS…VFLNQCVMDI (258 aa). Substrate-binding positions include D1274, 1308–1314, and Q1352; that span reads CSAGVGR. Catalysis depends on C1308, which acts as the Phosphocysteine intermediate.

The protein belongs to the protein-tyrosine phosphatase family. Receptor class 3 subfamily. Found on the apical surfaces of retinal Mueller cells, renal tubule cells and intestinal brush border cells.

It is found in the cell membrane. Its subcellular location is the cell projection. The protein localises to the ruffle membrane. The protein resides in the cell junction. It carries out the reaction O-phospho-L-tyrosyl-[protein] + H2O = L-tyrosyl-[protein] + phosphate. Functionally, tyrosine phosphatase which dephosphorylates or contributes to the dephosphorylation of several substrates. Plays a role in cell adhesion, migration, proliferation and differentiation. Has a role in megakaryocytes and platelet formation. May influence the potential of nonsensory supporting cells to either proliferate or differentiate into hair cells. This Gallus gallus (Chicken) protein is Receptor-type tyrosine-protein phosphatase eta (PTPRJ).